A 587-amino-acid polypeptide reads, in one-letter code: ATF/CREB activator 2 (587 aa).

Disordered stretches follow at residues Met1–Leu62, Leu123–Ser144, Asn169–Ala195, and Thr381–Thr423. Basic and acidic residues predominate over residues Lys16–Ser29. Low complexity-rich tracts occupy residues Ser39–Ala57 and Leu123–Gln134. Ser171 and Ser179 each carry phosphoserine. The segment covering Asn385 to His395 has biased composition (basic and acidic residues). Residues Ser396–Asn418 are compositionally biased toward polar residues. Position 399 is a phosphoserine (Ser399). Residues Ala425–His488 enclose the bZIP domain. The segment at Lys427–Lys447 is basic motif. The tract at residues Leu453–Leu467 is leucine-zipper. The interval Ser552–Lys587 is disordered. Ser557 is subject to Phosphoserine. Phosphothreonine is present on Thr559. Basic and acidic residues predominate over residues Asp565–Asp576. Positions Asn577–Lys587 are enriched in polar residues.

This sequence belongs to the bZIP family.

It is found in the nucleus. In terms of biological role, transcriptional activator of promoters containing ATF/CREB sites. Can independently stimulate transcription through ATF/CREB sites. Important for a variety of biological functions including growth on non-optimal carbon sources. The chain is ATF/CREB activator 2 (CST6) from Saccharomyces cerevisiae (strain ATCC 204508 / S288c) (Baker's yeast).